The chain runs to 191 residues: Orotate phosphoribosyltransferase (191 aa).

A 5-phospho-alpha-D-ribose 1-diphosphate-binding site is contributed by 114–122; it reads EDVITTGGS. Residues threonine 118 and arginine 146 each contribute to the orotate site.

It belongs to the purine/pyrimidine phosphoribosyltransferase family. PyrE subfamily. Homodimer. Requires Mg(2+) as cofactor.

The enzyme catalyses orotidine 5'-phosphate + diphosphate = orotate + 5-phospho-alpha-D-ribose 1-diphosphate. The protein operates within pyrimidine metabolism; UMP biosynthesis via de novo pathway; UMP from orotate: step 1/2. Catalyzes the transfer of a ribosyl phosphate group from 5-phosphoribose 1-diphosphate to orotate, leading to the formation of orotidine monophosphate (OMP). The chain is Orotate phosphoribosyltransferase from Desulforamulus reducens (strain ATCC BAA-1160 / DSM 100696 / MI-1) (Desulfotomaculum reducens).